The sequence spans 230 residues: RING finger protein 141 (230 aa).

The N-myristoyl glycine moiety is linked to residue G2. The segment at 155 to 192 adopts an RING-type zinc-finger fold; it reads CCICMDGRADLILPCAHSFCQKCIDKWSDRHRNCPICR.

As to expression, isoform 1 is testis-specific. Isoform 2 is expressed in heart, brain, skeletal muscle, kidney, pancreas, lung, liver and testis. Isoform 3 is expressed in heart, liver, and kidney.

Its subcellular location is the membrane. Functionally, may be involved in spermatogenesis. This chain is RING finger protein 141 (Rnf141), found in Mus musculus (Mouse).